The sequence spans 276 residues: NADPH-dependent 7-cyano-7-deazaguanine reductase (276 aa).

83–85 (IES) lines the substrate pocket. 85–86 (SK) is an NADPH binding site. Cysteine 184 serves as the catalytic Thioimide intermediate. Aspartate 191 (proton donor) is an active-site residue. Position 223-224 (223-224 (HE)) interacts with substrate. 252-253 (RG) lines the NADPH pocket.

It belongs to the GTP cyclohydrolase I family. QueF type 2 subfamily. In terms of assembly, homodimer.

The protein resides in the cytoplasm. It catalyses the reaction 7-aminomethyl-7-carbaguanine + 2 NADP(+) = 7-cyano-7-deazaguanine + 2 NADPH + 3 H(+). It functions in the pathway tRNA modification; tRNA-queuosine biosynthesis. Functionally, catalyzes the NADPH-dependent reduction of 7-cyano-7-deazaguanine (preQ0) to 7-aminomethyl-7-deazaguanine (preQ1). The protein is NADPH-dependent 7-cyano-7-deazaguanine reductase of Pseudomonas putida (strain ATCC 700007 / DSM 6899 / JCM 31910 / BCRC 17059 / LMG 24140 / F1).